The following is a 258-amino-acid chain: UPF0758 protein Bamb_2548 (258 aa).

Residues 1–43 (MLSPCLAAPATECRDPADAPAAPARHTGPARPRKRRPRNWKPH) are disordered. The span at 31–43 (RPRKRRPRNWKPH) shows a compositional bias: basic residues. The region spanning 136-258 (QIDSPGAVED…TFSFARAGWL (123 aa)) is the MPN domain. The Zn(2+) site is built by His207, His209, and Asp220. The JAMM motif motif lies at 207–220 (HNHPSGAVQPSAED).

This sequence belongs to the UPF0758 family.

The polypeptide is UPF0758 protein Bamb_2548 (Burkholderia ambifaria (strain ATCC BAA-244 / DSM 16087 / CCUG 44356 / LMG 19182 / AMMD) (Burkholderia cepacia (strain AMMD))).